The chain runs to 120 residues: uncharacterized protein (120 aa).

This is an uncharacterized protein from Dictyostelium discoideum (Social amoeba).